A 347-amino-acid chain; its full sequence is N-acetyl-gamma-glutamyl-phosphate reductase (347 aa).

Cysteine 151 is an active-site residue.

It belongs to the NAGSA dehydrogenase family. Type 1 subfamily.

It localises to the cytoplasm. It carries out the reaction N-acetyl-L-glutamate 5-semialdehyde + phosphate + NADP(+) = N-acetyl-L-glutamyl 5-phosphate + NADPH + H(+). It functions in the pathway amino-acid biosynthesis; L-arginine biosynthesis; N(2)-acetyl-L-ornithine from L-glutamate: step 3/4. Functionally, catalyzes the NADPH-dependent reduction of N-acetyl-5-glutamyl phosphate to yield N-acetyl-L-glutamate 5-semialdehyde. The chain is N-acetyl-gamma-glutamyl-phosphate reductase from Corynebacterium glutamicum (strain R).